The following is a 384-amino-acid chain: Galactokinase (384 aa).

34–37 (EHTD) contributes to the substrate binding site. Residue 123–129 (SSGLSSS) coordinates ATP. Residues serine 129 and glutamate 161 each contribute to the Mg(2+) site. Aspartate 173 functions as the Proton acceptor in the catalytic mechanism. Position 222 (tyrosine 222) interacts with substrate.

This sequence belongs to the GHMP kinase family. GalK subfamily.

The protein resides in the cytoplasm. It catalyses the reaction alpha-D-galactose + ATP = alpha-D-galactose 1-phosphate + ADP + H(+). Its pathway is carbohydrate metabolism; galactose metabolism. In terms of biological role, catalyzes the transfer of the gamma-phosphate of ATP to D-galactose to form alpha-D-galactose-1-phosphate (Gal-1-P). This Actinobacillus pleuropneumoniae serotype 5b (strain L20) protein is Galactokinase.